The following is a 150-amino-acid chain: MNVILLEKVQNLGSLGEQVAVKSGFARNFLIPQGKAKPATKENIAEFEARRAELEKLAAEALASAQAVYEKMNGTVVTIESVAGDEGKLFGSIGTADIADALSKAGFDVERKNIRMPEGALRYVGTFEFDVELHSDVVASITVEVKATEE.

It belongs to the bacterial ribosomal protein bL9 family.

In terms of biological role, binds to the 23S rRNA. This is Large ribosomal subunit protein bL9 from Hydrogenovibrio crunogenus (strain DSM 25203 / XCL-2) (Thiomicrospira crunogena).